The sequence spans 173 residues: uncharacterized protein (173 aa).

This is an uncharacterized protein from Mycobacterium tuberculosis (strain CDC 1551 / Oshkosh).